We begin with the raw amino-acid sequence, 381 residues long: Phosphatidyl-myo-inositol mannosyltransferase (381 aa).

GDP-alpha-D-mannose-binding residues include Tyr9 and Gly16. A 1,2-diacyl-sn-glycero-3-phospho-(1D-myo-inositol) contacts are provided by residues Gln18, 69–70 (FN), and Arg75. GDP-alpha-D-mannose contacts are provided by residues Arg204, 209–210 (RK), 251–253 (LDD), Arg256, 274–278 (ESFGI), and Glu282.

The protein belongs to the glycosyltransferase group 1 family. Glycosyltransferase 4 subfamily. As to quaternary structure, monomer. Mg(2+) is required as a cofactor.

Its subcellular location is the cell membrane. The catalysed reaction is a 1,2-diacyl-sn-glycero-3-phospho-(1D-myo-inositol) + GDP-alpha-D-mannose = a 1,2-diacyl-sn-glycero-3-phospho-[alpha-D-mannopyranosyl-(1&lt;-&gt;6)-D-myo-inositol] + GDP + H(+). The protein operates within phospholipid metabolism; phosphatidylinositol metabolism. Involved in the biosynthesis of phosphatidyl-myo-inositol mannosides (PIM) which are early precursors in the biosynthesis of lipomannans (LM) and lipoarabinomannans (LAM). Catalyzes the addition of a mannosyl residue from GDP-D-mannose (GDP-Man) to the position 2 of the carrier lipid phosphatidyl-myo-inositol (PI) to generate a phosphatidyl-myo-inositol bearing an alpha-1,2-linked mannose residue (PIM1). This chain is Phosphatidyl-myo-inositol mannosyltransferase, found in Propionibacterium freudenreichii subsp. shermanii (strain ATCC 9614 / DSM 4902 / CIP 103027 / NCIMB 8099 / CIRM-BIA1).